We begin with the raw amino-acid sequence, 271 residues long: Putative F-box protein L165 (271 aa).

The F-box domain occupies 4–49 (ICELFDDVILEIMNLLSDTDKINFMFCCSRFYYFIDLVYYNDIYDY). A disordered region spans residues 251–271 (NIPKIVPKNTHYRNSSKKYRY). Residues 260 to 271 (THYRNSSKKYRY) are compositionally biased toward basic residues.

This is Putative F-box protein L165 from Acanthamoeba polyphaga mimivirus (APMV).